The sequence spans 274 residues: Sulfur carrier protein FdhD (274 aa).

Cys120 functions as the Cysteine persulfide intermediate in the catalytic mechanism.

The protein belongs to the FdhD family.

Its subcellular location is the cytoplasm. Functionally, required for formate dehydrogenase (FDH) activity. Acts as a sulfur carrier protein that transfers sulfur from IscS to the molybdenum cofactor prior to its insertion into FDH. The sequence is that of Sulfur carrier protein FdhD from Burkholderia mallei (strain ATCC 23344).